We begin with the raw amino-acid sequence, 728 residues long: UvrABC system protein C (728 aa).

In terms of domain architecture, GIY-YIG spans 16 to 95 (DSPGVYRFRD…IKEYDPRFNV (80 aa)). Residues 208-243 (GTYLRRLERQMAEAAEEMEYERAARLRDDIGALKKA) form the UVR domain. Disordered stretches follow at residues 473 to 535 (ADGE…GRPK) and 689 to 728 (VNTATGEIMDDDDGAPETTADAPGEPVSAGTPDERRGQER). Residues 487–505 (GDAAPNGDAAPNDGAAPDD) are compositionally biased toward low complexity.

This sequence belongs to the UvrC family. In terms of assembly, interacts with UvrB in an incision complex.

It is found in the cytoplasm. Its function is as follows. The UvrABC repair system catalyzes the recognition and processing of DNA lesions. UvrC both incises the 5' and 3' sides of the lesion. The N-terminal half is responsible for the 3' incision and the C-terminal half is responsible for the 5' incision. The sequence is that of UvrABC system protein C from Streptomyces coelicolor (strain ATCC BAA-471 / A3(2) / M145).